The following is a 314-amino-acid chain: 3'-5' exoribonuclease YhaM (314 aa).

The region spanning His-163–Lys-279 is the HD domain.

Belongs to the YhaM family.

Functionally, shows a 3'-5' exoribonuclease activity. In Bacillus velezensis (strain DSM 23117 / BGSC 10A6 / LMG 26770 / FZB42) (Bacillus amyloliquefaciens subsp. plantarum), this protein is 3'-5' exoribonuclease YhaM.